A 539-amino-acid chain; its full sequence is Acid-sensing ion channel 4 (539 aa).

Residues 1–68 are Cytoplasmic-facing; it reads MPIEIVCKIK…GPGPHGLRRT (68 aa). Residues 69-89 form a helical membrane-spanning segment; the sequence is LWALALLTSLAAFLYQAASLA. The Extracellular portion of the chain corresponds to 90–438; it reads RGYLTRPHLV…EQQAAYGLSA (349 aa). Cystine bridges form between C118-C202 and C180-C187. N-linked (GlcNAc...) asparagine glycosylation is found at N191, N243, N341, and N376. Cystine bridges form between C296–C375, C318–C371, C322–C369, C331–C353, and C333–C345. The chain crosses the membrane as a helical span at residues 439–459; it reads LLGDLGGQMGLFIGASILTLL. The GAS motif; ion selectivity filter motif lies at 452–454; the sequence is GAS. The Cytoplasmic portion of the chain corresponds to 460–539; the sequence is EILDYIYEVS…PGSLFEDFAC (80 aa). Positions 500-531 are disordered; sequence KEQSPCPSRGRAEGGGASSLLPNHHHPHGPPG.

Belongs to the amiloride-sensitive sodium channel (TC 1.A.6) family. ASIC4 subfamily. In terms of assembly, homotrimer. Heterotrimer; with other ASIC proteins producing functional channels.

Its subcellular location is the cell membrane. Does not exhibit measurable stand-alone pH-gated sodium channel activity but may form pH-gated heterotrimeric sodium channels. Its activity could also depend on alternative gating mechanisms. The sequence is that of Acid-sensing ion channel 4 from Mus musculus (Mouse).